Here is a 375-residue protein sequence, read N- to C-terminus: MEAESPASAGASEPRALGTVDSIGSQLSRIRRKLFTWDILKTIALGQMLSLCICGTAITSQYLAEKYRVNTPMLQSFINYCLLFLVYTLMLAFQSGSDNLLEILRRKWWKYTLLGLADVEANYLIVRAYQYTTLTSVQLLDCFGIPVLMALSWFILRARYKVIHFIAVFVCLLGVGTMVGADILAGREDNSGSDVLIGDILVLLGASLYAVSNVCEEYIVKKLSRQEFLGMVGLFGTIISGIQLLIVEYKDIARIQWDWKIALLFVAFALCMFCLYSFMPLVIKVTSATSVNLGILTADLYSLFFGLFLFEYKFSGLYILSFTVIMVGFILYCSTPTRTVEPPESSVPPVTSIGIDNLGLKLEESGLPETHSAVL.

The residue at position 1 (methionine 1) is an N-acetylmethionine. Residues serine 5, serine 22, serine 25, and serine 28 each carry the phosphoserine modification. 10 helical membrane passes run 39-59 (ILKTIALGQMLSLCICGTAIT), 73-93 (MLQSFINYCLLFLVYTLMLAF), 108-126 (WWKYTLLGLADVEANYLIV), 136-156 (SVQLLDCFGIPVLMALSWFIL), 165-185 (FIAVFVCLLGVGTMVGADILA), 195-215 (VLIGDILVLLGASLYAVSNVC), 227-247 (EFLGMVGLFGTIISGIQLLIV), 263-283 (LLFVAFALCMFCLYSFMPLVI), 290-310 (SVNLGILTADLYSLFFGLFLF), and 314-334 (FSGLYILSFTVIMVGFILYCS). Phosphoserine is present on serine 372.

This sequence belongs to the SLC35F solute transporter family.

The protein resides in the membrane. Functionally, putative solute transporter. The polypeptide is Solute carrier family 35 member F2 (Slc35f2) (Mus musculus (Mouse)).